The following is a 485-amino-acid chain: Ribulose bisphosphate carboxylase large chain 2 (485 aa).

Residues N124 and T174 each contribute to the substrate site. K176 acts as the Proton acceptor in catalysis. A substrate-binding site is contributed by K178. The Mg(2+) site is built by K202, D204, and E205. At K202 the chain carries N6-carboxylysine. Catalysis depends on H294, which acts as the Proton acceptor. 3 residues coordinate substrate: R295, H327, and S379.

Belongs to the RuBisCO large chain family. Type I subfamily. As to quaternary structure, heterohexadecamer of 8 large chains and 8 small chains. Mg(2+) serves as cofactor.

It catalyses the reaction 2 (2R)-3-phosphoglycerate + 2 H(+) = D-ribulose 1,5-bisphosphate + CO2 + H2O. It carries out the reaction D-ribulose 1,5-bisphosphate + O2 = 2-phosphoglycolate + (2R)-3-phosphoglycerate + 2 H(+). In terms of biological role, ruBisCO catalyzes two reactions: the carboxylation of D-ribulose 1,5-bisphosphate, the primary event in carbon dioxide fixation, as well as the oxidative fragmentation of the pentose substrate. Both reactions occur simultaneously and in competition at the same active site. The polypeptide is Ribulose bisphosphate carboxylase large chain 2 (Rhodopseudomonas palustris (strain BisB5)).